Consider the following 310-residue polypeptide: Methionyl-tRNA formyltransferase (310 aa).

109-112 (SLLP) serves as a coordination point for (6S)-5,6,7,8-tetrahydrofolate.

Belongs to the Fmt family.

The enzyme catalyses L-methionyl-tRNA(fMet) + (6R)-10-formyltetrahydrofolate = N-formyl-L-methionyl-tRNA(fMet) + (6S)-5,6,7,8-tetrahydrofolate + H(+). Attaches a formyl group to the free amino group of methionyl-tRNA(fMet). The formyl group appears to play a dual role in the initiator identity of N-formylmethionyl-tRNA by promoting its recognition by IF2 and preventing the misappropriation of this tRNA by the elongation apparatus. The polypeptide is Methionyl-tRNA formyltransferase (Pseudomonas putida (strain GB-1)).